Reading from the N-terminus, the 217-residue chain is ATP-dependent Clp protease proteolytic subunit 3 (217 aa).

Residues 1–13 (MSPFTAGPAPART) are compositionally biased toward low complexity. Residues 1–23 (MSPFTAGPAPARTPRAEEGDTPA) are disordered. S108 functions as the Nucleophile in the catalytic mechanism. The active site involves H133.

It belongs to the peptidase S14 family. In terms of assembly, fourteen ClpP subunits assemble into 2 heptameric rings which stack back to back to give a disk-like structure with a central cavity, resembling the structure of eukaryotic proteasomes.

It localises to the cytoplasm. It catalyses the reaction Hydrolysis of proteins to small peptides in the presence of ATP and magnesium. alpha-casein is the usual test substrate. In the absence of ATP, only oligopeptides shorter than five residues are hydrolyzed (such as succinyl-Leu-Tyr-|-NHMec, and Leu-Tyr-Leu-|-Tyr-Trp, in which cleavage of the -Tyr-|-Leu- and -Tyr-|-Trp bonds also occurs).. In terms of biological role, cleaves peptides in various proteins in a process that requires ATP hydrolysis. Has a chymotrypsin-like activity. Plays a major role in the degradation of misfolded proteins. The chain is ATP-dependent Clp protease proteolytic subunit 3 from Streptomyces coelicolor (strain ATCC BAA-471 / A3(2) / M145).